Here is a 359-residue protein sequence, read N- to C-terminus: DNA polymerase IV (359 aa).

Residues 4–185 enclose the UmuC domain; sequence IIHIDMDCYF…LPLSKIPGVG (182 aa). Mg(2+) contacts are provided by D8 and D103. Residue E104 is part of the active site.

This sequence belongs to the DNA polymerase type-Y family. Monomer. The cofactor is Mg(2+).

The protein localises to the cytoplasm. The catalysed reaction is DNA(n) + a 2'-deoxyribonucleoside 5'-triphosphate = DNA(n+1) + diphosphate. Functionally, poorly processive, error-prone DNA polymerase involved in untargeted mutagenesis. Copies undamaged DNA at stalled replication forks, which arise in vivo from mismatched or misaligned primer ends. These misaligned primers can be extended by PolIV. Exhibits no 3'-5' exonuclease (proofreading) activity. May be involved in translesional synthesis, in conjunction with the beta clamp from PolIII. The polypeptide is DNA polymerase IV (Shewanella frigidimarina (strain NCIMB 400)).